The chain runs to 205 residues: Molybdenum cofactor guanylyltransferase (205 aa).

GTP-binding positions include 14 to 16, Lys27, Asp77, and Asp107; that span reads LAG. Position 107 (Asp107) interacts with Mg(2+).

It belongs to the MobA family. In terms of assembly, monomer. Mg(2+) serves as cofactor.

The protein resides in the cytoplasm. The enzyme catalyses Mo-molybdopterin + GTP + H(+) = Mo-molybdopterin guanine dinucleotide + diphosphate. Functionally, transfers a GMP moiety from GTP to Mo-molybdopterin (Mo-MPT) cofactor (Moco or molybdenum cofactor) to form Mo-molybdopterin guanine dinucleotide (Mo-MGD) cofactor. This chain is Molybdenum cofactor guanylyltransferase, found in Burkholderia vietnamiensis (strain G4 / LMG 22486) (Burkholderia cepacia (strain R1808)).